Here is a 292-residue protein sequence, read N- to C-terminus: ATP synthase gamma chain (292 aa).

It belongs to the ATPase gamma chain family. As to quaternary structure, F-type ATPases have 2 components, CF(1) - the catalytic core - and CF(0) - the membrane proton channel. CF(1) has five subunits: alpha(3), beta(3), gamma(1), delta(1), epsilon(1). CF(0) has three main subunits: a, b and c.

The protein localises to the cell inner membrane. Its function is as follows. Produces ATP from ADP in the presence of a proton gradient across the membrane. The gamma chain is believed to be important in regulating ATPase activity and the flow of protons through the CF(0) complex. The sequence is that of ATP synthase gamma chain from Nautilia profundicola (strain ATCC BAA-1463 / DSM 18972 / AmH).